The chain runs to 265 residues: Upstream stimulatory factor (265 aa).

Residues methionine 1 to aspartate 18 are compositionally biased toward basic and acidic residues. 2 disordered regions span residues methionine 1 to glutamate 21 and alanine 119 to glycine 149. The span at glycine 134–serine 144 shows a compositional bias: polar residues. Residues arginine 190 to leucine 245 enclose the bHLH domain.

As to quaternary structure, efficient DNA binding requires dimerization with another bHLH protein. Binds DNA as a homodimer or a heterodimer. In terms of tissue distribution, enriched in ectodermal tissue.

It localises to the nucleus. May act as a transcription factor which recognizes the CACGTG motif on SPEC gene promoters. In Strongylocentrotus purpuratus (Purple sea urchin), this protein is Upstream stimulatory factor.